A 136-amino-acid polypeptide reads, in one-letter code: uncharacterized protein (136 aa).

This is an uncharacterized protein from Ictaluridae (bullhead catfishes).